A 2535-amino-acid chain; its full sequence is Piezo-type mechanosensitive ion channel component 1 (2535 aa).

The next 3 helical transmembrane spans lie at 13 to 25 (LLLP…ASLL), 29 to 44 (ALSL…LPWL), and 59 to 81 (LLRA…QICL). N100 carries N-linked (GlcNAc...) asparagine glycosylation. Transmembrane regions (helical) follow at residues 122–138 (VAPD…CLGL), 193–212 (LLVT…AGIA), 215–234 (SAFS…WWSC), 246–266 (LCVM…CYQT), and 308–328 (WPIY…TSLL). Positions 346-357 (DEEHELELDQLE) are enriched in acidic residues. The interval 346–377 (DEEHELELDQLEPEPQARGTTQGATPTTTGPD) is disordered. Residues 358 to 376 (PEPQARGTTQGATPTTTGP) are compositionally biased toward low complexity. N-linked (GlcNAc...) asparagine glycosylation is present at N380. The next 8 membrane-spanning stretches (helical) occupy residues 416 to 436 (LILD…SIMY), 439 to 454 (WLTF…IWTV), 460 to 482 (LAML…RYVW), 510 to 527 (CLDL…WLLL), 572 to 592 (IYVK…SFAG), 594 to 614 (LVVY…LFQV), 625 to 646 (VFWW…TFQF), and 677 to 693 (LFSS…ACIL). A Phosphoserine modification is found at S749. The next 12 membrane-spanning stretches (helical) occupy residues 803 to 814 (LVALYTVWVALK), 818 to 831 (VMNL…AFAL), 846 to 860 (VWTC…LYQL), 913 to 940 (GYIQ…HYRR), 981 to 996 (GLEI…IGQR), 999 to 1014 (FMVI…ILTR), 1028 to 1043 (CLFL…LLCL), 1083 to 1104 (TNLI…VFSA), 1140 to 1166 (YLDM…TGAT), 1172 to 1190 (GLGY…TTLL), 1204 to 1222 (LILY…SLLS), and 1272 to 1288 (IWDS…RRVF). The stretch at 1325-1356 (HRQTEERSLAQLKRQMKRIRAKQEKYRQSQAS) forms a coiled coil. Disordered regions lie at residues 1345-1383 (AKQE…RTQW) and 1556-1597 (SGPV…NTRS). A compositionally biased stretch (polar residues) spans 1352 to 1365 (QSQASRGQLQSTDP). 2 positions are modified to phosphoserine: S1372 and S1377. Residues 1579-1597 (SSMTDDTGSPLSTGYNTRS) show a composition bias toward polar residues. Phosphoserine is present on residues S1614, S1618, and S1633. Helical transmembrane passes span 1644-1687 (PELE…LNHM), 1692-1707 (AASL…WAML), 1716-1734 (FWMT…KYLF), and 1767-1788 (DSYI…SQLL). 2 stretches are compositionally biased toward basic and acidic residues: residues 1801 to 1811 (PKDHCRSSEKD) and 1842 to 1867 (PKDH…DLKP). The interval 1801–1911 (PKDHCRSSEK…GREAAGRKRL (111 aa)) is disordered. The segment covering 1868-1881 (QHRRHISIRFRRRK) has biased composition (basic residues). 5 helical membrane passes run 1965–1984 (YALM…FGFW), 2005–2021 (PQAF…TMVI), 2036–2056 (AFQV…LPAV), 2065–2080 (AVAQ…YFAL), and 2181–2201 (GLII…MSLI). A disulfide bond links C2425 and C2429. Residues 2446–2466 (LGFLAGYGIVGLYVSIVLVVG) form a helical membrane-spanning segment.

Belongs to the PIEZO (TC 1.A.75) family. Homotrimer; the homotrimer forms a propeller-shaped Piezo channel with a cation-ion conducting pore. Heterotrimeric interaction may occur between PIEZO1 and PIEZO2. Interacts with PKD2. Interacts with STOM13. Interacts with TMC1, TMC2, PCDH15 and CIB2; the interaction may be part of the MET complex. Interacts with MDFIC (via C-terminus); the interaction prolongs Piezo channel inactivation. Interacts with MDFI (via C-terminus); the interaction prolongs Piezo channel inactivation. In terms of tissue distribution, moderate expression in lung and kidney. Very weak expression in heart, spleen and liver.

Its subcellular location is the endoplasmic reticulum membrane. The protein localises to the endoplasmic reticulum-Golgi intermediate compartment membrane. It localises to the cell membrane. It is found in the cell projection. The protein resides in the lamellipodium membrane. It catalyses the reaction K(+)(in) = K(+)(out). It carries out the reaction Na(+)(in) = Na(+)(out). The catalysed reaction is Ca(2+)(in) = Ca(2+)(out). The enzyme catalyses Mg(2+)(in) = Mg(2+)(out). Regulated by auxillary subunits MDFIC and MDFI. Down-regulated by phosphatidylserines exposed on the cell surface. Divalent ions decrease the single-channel permeability of K(+). Functionally, pore-forming subunit of the mechanosensitive non-specific cation Piezo channel required for rapidly adapting mechanically activated (MA) currents and has a key role in sensing touch and tactile pain. Piezo channels are homotrimeric three-blade propeller-shaped structures that utilize a cap-motion and plug-and-latch mechanism to gate their ion-conducting pathways. Generates currents characterized by a linear current-voltage relationship that are sensitive to ruthenium red and gadolinium. Conductance to monovalent alkali ions is highest for K(+), intermediate for Na(+) and lowest for Li(+). Divalent ions except for Mn(2+) permeate the channel but more slowly than the monovalent ions and they also reduce K(+) currents. Plays a key role in epithelial cell adhesion by maintaining integrin activation through R-Ras recruitment to the ER, most probably in its activated state, and subsequent stimulation of calpain signaling. In inner ear hair cells, PIEZO1/2 subunits may constitute part of the mechanotransducer (MET) non-selective cation channel complex where they may act as pore-forming ion-conducting component in the complex. In the kidney, may contribute to the detection of intraluminal pressure changes and to urine flow sensing. Acts as a shear-stress sensor that promotes endothelial cell organization and alignment in the direction of blood flow through calpain activation. Plays a key role in blood vessel formation and vascular structure in both development and adult physiology. Acts as a sensor of phosphatidylserine (PS) flipping at the plasma membrane and governs morphogenesis of muscle cells. In myoblasts, flippase-mediated PS enrichment at the inner leaflet of plasma membrane triggers channel activation and Ca(2+) influx followed by Rho GTPases signal transduction, leading to assembly of cortical actomyosin fibers and myotube formation. This Rattus norvegicus (Rat) protein is Piezo-type mechanosensitive ion channel component 1 (Piezo1).